The primary structure comprises 526 residues: Cytochrome P450 4e2 (526 aa).

Heme-binding residues include Glu-307 and Cys-444.

It belongs to the cytochrome P450 family. Requires heme as cofactor.

It localises to the endoplasmic reticulum membrane. The protein resides in the microsome membrane. Its function is as follows. May be involved in the metabolism of insect hormones and in the breakdown of synthetic insecticides. This is Cytochrome P450 4e2 (Cyp4e2) from Drosophila melanogaster (Fruit fly).